The primary structure comprises 556 residues: Formate--tetrahydrofolate ligase (556 aa).

Residue 65-72 (TPAGEGKT) coordinates ATP.

The protein belongs to the formate--tetrahydrofolate ligase family.

The enzyme catalyses (6S)-5,6,7,8-tetrahydrofolate + formate + ATP = (6R)-10-formyltetrahydrofolate + ADP + phosphate. The protein operates within one-carbon metabolism; tetrahydrofolate interconversion. This is Formate--tetrahydrofolate ligase from Maricaulis maris (strain MCS10) (Caulobacter maris).